Consider the following 661-residue polypeptide: Bifunctional polymyxin resistance protein ArnA (661 aa).

Residues 1–304 (MKAVVFAYHD…ALGLVSGAVI (304 aa)) form a formyltransferase ArnAFT region. H104 serves as the catalytic Proton donor; for formyltransferase activity. (6R)-10-formyltetrahydrofolate contacts are provided by residues R114 and 136 to 140 (VNRAD). A dehydrogenase ArnADH region spans residues 314 to 661 (RRTRVLILGV…TVELVDDKNP (348 aa)). NAD(+) contacts are provided by residues D347 and 368–369 (DI). UDP-alpha-D-glucuronate is bound by residues A393, Y398, and 432-433 (TS). The active-site Proton acceptor; for decarboxylase activity is the E434. UDP-alpha-D-glucuronate contacts are provided by residues R460, N492, 526–535 (KLIEGGKQKR), and Y613. R619 serves as the catalytic Proton donor; for decarboxylase activity.

It in the N-terminal section; belongs to the Fmt family. UDP-L-Ara4N formyltransferase subfamily. The protein in the C-terminal section; belongs to the NAD(P)-dependent epimerase/dehydratase family. UDP-glucuronic acid decarboxylase subfamily. In terms of assembly, homohexamer, formed by a dimer of trimers.

The enzyme catalyses UDP-alpha-D-glucuronate + NAD(+) = UDP-beta-L-threo-pentopyranos-4-ulose + CO2 + NADH. It catalyses the reaction UDP-4-amino-4-deoxy-beta-L-arabinose + (6R)-10-formyltetrahydrofolate = UDP-4-deoxy-4-formamido-beta-L-arabinose + (6S)-5,6,7,8-tetrahydrofolate + H(+). It participates in nucleotide-sugar biosynthesis; UDP-4-deoxy-4-formamido-beta-L-arabinose biosynthesis; UDP-4-deoxy-4-formamido-beta-L-arabinose from UDP-alpha-D-glucuronate: step 1/3. It functions in the pathway nucleotide-sugar biosynthesis; UDP-4-deoxy-4-formamido-beta-L-arabinose biosynthesis; UDP-4-deoxy-4-formamido-beta-L-arabinose from UDP-alpha-D-glucuronate: step 3/3. Its pathway is bacterial outer membrane biogenesis; lipopolysaccharide biosynthesis. Functionally, bifunctional enzyme that catalyzes the oxidative decarboxylation of UDP-glucuronic acid (UDP-GlcUA) to UDP-4-keto-arabinose (UDP-Ara4O) and the addition of a formyl group to UDP-4-amino-4-deoxy-L-arabinose (UDP-L-Ara4N) to form UDP-L-4-formamido-arabinose (UDP-L-Ara4FN). The modified arabinose is attached to lipid A and is required for resistance to polymyxin and cationic antimicrobial peptides. This chain is Bifunctional polymyxin resistance protein ArnA, found in Klebsiella pneumoniae subsp. pneumoniae (strain ATCC 700721 / MGH 78578).